We begin with the raw amino-acid sequence, 262 residues long: Short-chain Z-isoprenyl diphosphate synthase (262 aa).

Residue aspartate 40 is part of the active site. Aspartate 40 is a Mg(2+) binding site. Residues 41 to 44 (GNRR), tryptophan 45, and 86 to 88 (STE) each bind substrate. Asparagine 89 serves as the catalytic Proton acceptor. Residues arginine 92, arginine 211, and 217–219 (RLS) contribute to the substrate site. Glutamate 230 serves as a coordination point for Mg(2+).

Belongs to the UPP synthase family. Z-FPP synthase subfamily. Mg(2+) is required as a cofactor.

It carries out the reaction isopentenyl diphosphate + (2E)-geranyl diphosphate = (2Z,6E)-farnesyl diphosphate + diphosphate. It functions in the pathway phospholipid metabolism; decaprenyl phosphate biosynthesis. Functionally, generates Z-farnesyl diphosphate (Z-FPP) from isopentenyl pyrophosphate (IPP). Z-FPP is the precursor of decaprenyl diphosphate, which has a central role in the biosynthesis of the mycobacterial cell wall. This Mycobacterium bovis (strain ATCC BAA-935 / AF2122/97) protein is Short-chain Z-isoprenyl diphosphate synthase.